A 65-amino-acid chain; its full sequence is Ferredoxin-like protein in vnf region (65 aa).

2 4Fe-4S ferredoxin-type domains span residues 2–30 and 32–65; these read AMAI…FRDD and YAIE…PLDD. Residues cysteine 10, cysteine 13, cysteine 16, cysteine 20, cysteine 39, cysteine 42, cysteine 50, and cysteine 54 each contribute to the [4Fe-4S] cluster site.

It depends on [4Fe-4S] cluster as a cofactor.

The chain is Ferredoxin-like protein in vnf region from Azotobacter vinelandii.